The primary structure comprises 488 residues: Cobyric acid synthase (488 aa).

In terms of domain architecture, GATase cobBQ-type spans 248–441 (VLRVVVPALP…VHGLFDTPAA (194 aa)). Cys328 acts as the Nucleophile in catalysis. His433 is an active-site residue.

This sequence belongs to the CobB/CobQ family. CobQ subfamily.

Its pathway is cofactor biosynthesis; adenosylcobalamin biosynthesis. Its function is as follows. Catalyzes amidations at positions B, D, E, and G on adenosylcobyrinic A,C-diamide. NH(2) groups are provided by glutamine, and one molecule of ATP is hydrogenolyzed for each amidation. In Burkholderia vietnamiensis (strain G4 / LMG 22486) (Burkholderia cepacia (strain R1808)), this protein is Cobyric acid synthase.